Consider the following 61-residue polypeptide: DNA-directed RNA polymerase subunit Rpo6 (61 aa).

It belongs to the archaeal Rpo6/eukaryotic RPB6 RNA polymerase subunit family. Part of the RNA polymerase complex.

Its subcellular location is the cytoplasm. It catalyses the reaction RNA(n) + a ribonucleoside 5'-triphosphate = RNA(n+1) + diphosphate. DNA-dependent RNA polymerase (RNAP) catalyzes the transcription of DNA into RNA using the four ribonucleoside triphosphates as substrates. This chain is DNA-directed RNA polymerase subunit Rpo6, found in Thermoplasma volcanium (strain ATCC 51530 / DSM 4299 / JCM 9571 / NBRC 15438 / GSS1).